Here is a 297-residue protein sequence, read N- to C-terminus: ATP synthase gamma chain (297 aa).

Belongs to the ATPase gamma chain family. In terms of assembly, F-type ATPases have 2 components, CF(1) - the catalytic core - and CF(0) - the membrane proton channel. CF(1) has five subunits: alpha(3), beta(3), gamma(1), delta(1), epsilon(1). CF(0) has three main subunits: a, b and c.

It is found in the cell membrane. Produces ATP from ADP in the presence of a proton gradient across the membrane. The gamma chain is believed to be important in regulating ATPase activity and the flow of protons through the CF(0) complex. This is ATP synthase gamma chain from Arthrobacter sp. (strain FB24).